We begin with the raw amino-acid sequence, 417 residues long: Serine hydroxymethyltransferase (417 aa).

(6S)-5,6,7,8-tetrahydrofolate is bound by residues L112 and 116–118 (GHL). K221 is subject to N6-(pyridoxal phosphate)lysine. E247 contacts (6S)-5,6,7,8-tetrahydrofolate.

The protein belongs to the SHMT family. Homodimer. Pyridoxal 5'-phosphate serves as cofactor.

Its subcellular location is the cytoplasm. It catalyses the reaction (6R)-5,10-methylene-5,6,7,8-tetrahydrofolate + glycine + H2O = (6S)-5,6,7,8-tetrahydrofolate + L-serine. The protein operates within one-carbon metabolism; tetrahydrofolate interconversion. It participates in amino-acid biosynthesis; glycine biosynthesis; glycine from L-serine: step 1/1. In terms of biological role, catalyzes the reversible interconversion of serine and glycine with tetrahydrofolate (THF) serving as the one-carbon carrier. This reaction serves as the major source of one-carbon groups required for the biosynthesis of purines, thymidylate, methionine, and other important biomolecules. Also exhibits THF-independent aldolase activity toward beta-hydroxyamino acids, producing glycine and aldehydes, via a retro-aldol mechanism. This is Serine hydroxymethyltransferase from Borrelia garinii subsp. bavariensis (strain ATCC BAA-2496 / DSM 23469 / PBi) (Borreliella bavariensis).